The following is a 505-amino-acid chain: 2,3-bisphosphoglycerate-independent phosphoglycerate mutase (505 aa).

Residues Asp-12 and Ser-62 each contribute to the Mn(2+) site. Ser-62 acts as the Phosphoserine intermediate in catalysis. Residues His-123, 153–154 (RD), Arg-185, Arg-191, 257–260 (RPDR), and Lys-330 contribute to the substrate site. Residues Asp-397, His-401, Asp-438, His-439, and His-456 each contribute to the Mn(2+) site.

The protein belongs to the BPG-independent phosphoglycerate mutase family. In terms of assembly, monomer. It depends on Mn(2+) as a cofactor.

The enzyme catalyses (2R)-2-phosphoglycerate = (2R)-3-phosphoglycerate. Its pathway is carbohydrate degradation; glycolysis; pyruvate from D-glyceraldehyde 3-phosphate: step 3/5. Functionally, catalyzes the interconversion of 2-phosphoglycerate and 3-phosphoglycerate. This chain is 2,3-bisphosphoglycerate-independent phosphoglycerate mutase, found in Staphylococcus saprophyticus subsp. saprophyticus (strain ATCC 15305 / DSM 20229 / NCIMB 8711 / NCTC 7292 / S-41).